The sequence spans 141 residues: MLMPKKTKYSKMMKGRNRGYAVRGIKLNFGDYGIKAVEAGRINSNQIEAARIAMTRYVNREAKVWINVFPDKPLTKKPLQTRMGKGKTGVEEWVMNIKPGRIIFELTGVNEDVARRALELSMHKLPFKTKIVTRESENEIY.

This sequence belongs to the universal ribosomal protein uL16 family. As to quaternary structure, part of the 50S ribosomal subunit.

In terms of biological role, binds 23S rRNA and is also seen to make contacts with the A and possibly P site tRNAs. This Campylobacter hominis (strain ATCC BAA-381 / DSM 21671 / CCUG 45161 / LMG 19568 / NCTC 13146 / CH001A) protein is Large ribosomal subunit protein uL16.